A 241-amino-acid polypeptide reads, in one-letter code: Biosynthetic peptidoglycan transglycosylase (241 aa).

A helical transmembrane segment spans residues 18 to 38; that stretch reads GVIGIIALWMAGILIFAFLPV.

The protein belongs to the glycosyltransferase 51 family.

It localises to the cell inner membrane. It catalyses the reaction [GlcNAc-(1-&gt;4)-Mur2Ac(oyl-L-Ala-gamma-D-Glu-L-Lys-D-Ala-D-Ala)](n)-di-trans,octa-cis-undecaprenyl diphosphate + beta-D-GlcNAc-(1-&gt;4)-Mur2Ac(oyl-L-Ala-gamma-D-Glu-L-Lys-D-Ala-D-Ala)-di-trans,octa-cis-undecaprenyl diphosphate = [GlcNAc-(1-&gt;4)-Mur2Ac(oyl-L-Ala-gamma-D-Glu-L-Lys-D-Ala-D-Ala)](n+1)-di-trans,octa-cis-undecaprenyl diphosphate + di-trans,octa-cis-undecaprenyl diphosphate + H(+). Its pathway is cell wall biogenesis; peptidoglycan biosynthesis. Peptidoglycan polymerase that catalyzes glycan chain elongation from lipid-linked precursors. The polypeptide is Biosynthetic peptidoglycan transglycosylase (Yersinia pseudotuberculosis serotype O:1b (strain IP 31758)).